We begin with the raw amino-acid sequence, 685 residues long: Acetate--CoA ligase [ADP-forming] I (685 aa).

Residues 477-513 enclose the ATP-grasp domain; the sequence is LPVLEAYGIEVAPYGIARNVDEARDIAESIGYPVVLK. 503–514 contacts ATP; it reads AESIGYPVVLKV.

It in the N-terminal section; belongs to the acetate CoA ligase alpha subunit family. In the C-terminal section; belongs to the acetate CoA ligase beta subunit family. As to quaternary structure, homodimer.

The catalysed reaction is acetate + ATP + CoA = acetyl-CoA + ADP + phosphate. With respect to regulation, activity requires divalent metal cations. Catalyzes the reversible formation of acetate and ATP from acetyl-CoA by using ADP and phosphate. Can use other substrates such as propionyl-CoA and butyryl-CoA, but not phenylacetyl-CoA. Seems to be involved primarily in the conversion of acetyl-CoA to acetate. Participates in the degradation of branched-chain amino acids via branched-chain-acyl-CoA esters. In Archaeoglobus fulgidus (strain ATCC 49558 / DSM 4304 / JCM 9628 / NBRC 100126 / VC-16), this protein is Acetate--CoA ligase [ADP-forming] I.